The sequence spans 363 residues: Autophagy-related protein 3 (363 aa).

Basic and acidic residues-rich tracts occupy residues aspartate 84–glycine 106 and alanine 129–aspartate 138. A flexible region region spans residues aspartate 84–lysine 171. Residues aspartate 84–asparagine 174 form a disordered region. Over residues glutamate 139–glutamate 164 the composition is skewed to acidic residues. Cysteine 247 serves as the catalytic Glycyl thioester intermediate. Residues serine 251–glutamine 339 form a handle region region.

This sequence belongs to the ATG3 family. In terms of assembly, monomer. Interacts with atg8 through an intermediate thioester bond through the C-terminal Gly of atg8. Interacts with the C-terminal region of the E1-like atg7 enzyme. Also interacts with the atg12-atg5 conjugate.

It localises to the cytoplasm. Functionally, E2 conjugating enzyme required for the cytoplasm to vacuole transport (Cvt) and autophagy. Required for selective autophagic degradation of the nucleus (nucleophagy) as well as for mitophagy which contributes to regulate mitochondrial quantity and quality by eliminating the mitochondria to a basal level to fulfill cellular energy requirements and preventing excess ROS production. Responsible for the E2-like covalent binding of phosphatidylethanolamine to the C-terminal Gly of atg8. The atg12-atg5 conjugate plays a role of an E3 and promotes the transfer of atg8 from atg3 to phosphatidylethanolamine (PE). This step is required for the membrane association of atg8. The formation of the atg8-phosphatidylethanolamine conjugate is essential for autophagy and for the cytoplasm to vacuole transport (Cvt). The atg8-PE conjugate mediates tethering between adjacent membranes and stimulates membrane hemifusion, leading to expansion of the autophagosomal membrane during autophagy. Required for normal mycelial growth and conidiogenesis, and regulates sclerotial formation. Plays an essential role in pathogenesis. This is Autophagy-related protein 3 from Botryotinia fuckeliana (strain BcDW1) (Noble rot fungus).